The primary structure comprises 349 residues: Peroxidase C3 (349 aa).

The signal sequence occupies residues 1 to 29 (MGFSPLISCSAMGALILSCLLLQASNSNA). 4 disulfide bridges follow: cysteine 40–cysteine 120, cysteine 73–cysteine 78, cysteine 126–cysteine 329, and cysteine 206–cysteine 238. Histidine 71 functions as the Proton acceptor in the catalytic mechanism. Ca(2+)-binding residues include aspartate 72, valine 75, glycine 77, aspartate 79, and serine 81. A glycan (N-linked (GlcNAc...) asparagine) is linked at asparagine 86. Position 168 (proline 168) interacts with substrate. Position 199 (histidine 199) interacts with heme b. Threonine 200 is a Ca(2+) binding site. Asparagine 217 and asparagine 243 each carry an N-linked (GlcNAc...) asparagine glycan. Positions 251, 254, and 259 each coordinate Ca(2+).

It belongs to the peroxidase family. Classical plant (class III) peroxidase subfamily. It depends on Ca(2+) as a cofactor. Heme b serves as cofactor.

The protein localises to the secreted. Its subcellular location is the vacuole. It carries out the reaction 2 a phenolic donor + H2O2 = 2 a phenolic radical donor + 2 H2O. Removal of H(2)O(2), oxidation of toxic reductants, biosynthesis and degradation of lignin, suberization, auxin catabolism, response to environmental stresses such as wounding, pathogen attack and oxidative stress. These functions might be dependent on each isozyme/isoform in each plant tissue. In Armoracia rusticana (Horseradish), this protein is Peroxidase C3 (PRXC3).